Reading from the N-terminus, the 65-residue chain is Potassium channel toxin alpha-KTx 12.6 (65 aa).

A signal peptide spans Met-1–Ala-22. Disulfide bonds link Cys-30–Cys-51, Cys-36–Cys-56, and Cys-40–Cys-58.

This sequence belongs to the short scorpion toxin superfamily. Potassium channel inhibitor family. Alpha-KTx 12 subfamily. In terms of tissue distribution, expressed by the venom gland.

It is found in the secreted. In terms of biological role, inhibits voltage-gated potassium channels. This chain is Potassium channel toxin alpha-KTx 12.6, found in Lychas mucronatus (Chinese swimming scorpion).